A 256-amino-acid chain; its full sequence is Small ribosomal subunit protein eS1A (256 aa).

Ala-2 is modified (N-acetylalanine; partial).

Belongs to the eukaryotic ribosomal protein eS1 family. In terms of assembly, component of the small ribosomal subunit. Mature ribosomes consist of a small (40S) and a large (60S) subunit. The 40S subunit contains about 33 different proteins and 1 molecule of RNA (18S). The 60S subunit contains about 49 different proteins and 3 molecules of RNA (25S, 5.8S and 5S).

Its subcellular location is the cytoplasm. The protein is Small ribosomal subunit protein eS1A of Debaryomyces hansenii (strain ATCC 36239 / CBS 767 / BCRC 21394 / JCM 1990 / NBRC 0083 / IGC 2968) (Yeast).